Here is a 213-residue protein sequence, read N- to C-terminus: Uridine kinase (213 aa).

Position 15 to 22 (15 to 22 (GASASGKS)) interacts with ATP.

It belongs to the uridine kinase family.

The protein resides in the cytoplasm. It carries out the reaction uridine + ATP = UMP + ADP + H(+). The enzyme catalyses cytidine + ATP = CMP + ADP + H(+). Its pathway is pyrimidine metabolism; CTP biosynthesis via salvage pathway; CTP from cytidine: step 1/3. It functions in the pathway pyrimidine metabolism; UMP biosynthesis via salvage pathway; UMP from uridine: step 1/1. The polypeptide is Uridine kinase (Escherichia fergusonii (strain ATCC 35469 / DSM 13698 / CCUG 18766 / IAM 14443 / JCM 21226 / LMG 7866 / NBRC 102419 / NCTC 12128 / CDC 0568-73)).